Reading from the N-terminus, the 141-residue chain is uncharacterized protein (141 aa).

Residues 4–139 (RTQMMYDMET…LIELFSKLDK (136 aa)) form the HTH marR-type domain. The segment at residues 53-76 (VTEFAPILEVSASHITAVTDALVE) is a DNA-binding region (H-T-H motif).

This is an uncharacterized protein from Bacillus subtilis (strain 168).